The following is a 276-amino-acid chain: Large ribosomal subunit protein uL2c (276 aa).

The interval 225–256 (NPVDHPHGGGEGRSPIGRPKPVSPWGKTALGA) is disordered.

This sequence belongs to the universal ribosomal protein uL2 family. In terms of assembly, part of the 50S ribosomal subunit.

It is found in the plastid. The protein resides in the chloroplast. The chain is Large ribosomal subunit protein uL2c (rpl2) from Mesostigma viride (Green alga).